A 221-amino-acid chain; its full sequence is 7-cyano-7-deazaguanine synthase (221 aa).

ATP is bound at residue 12-22 (FSGGQDSTTCL). 4 residues coordinate Zn(2+): C190, C199, C202, and C205.

The protein belongs to the QueC family. Homodimer. Zn(2+) serves as cofactor.

The catalysed reaction is 7-carboxy-7-deazaguanine + NH4(+) + ATP = 7-cyano-7-deazaguanine + ADP + phosphate + H2O + H(+). Its pathway is purine metabolism; 7-cyano-7-deazaguanine biosynthesis. Its function is as follows. Catalyzes the ATP-dependent conversion of 7-carboxy-7-deazaguanine (CDG) to 7-cyano-7-deazaguanine (preQ(0)). The protein is 7-cyano-7-deazaguanine synthase of Clostridium novyi (strain NT).